We begin with the raw amino-acid sequence, 178 residues long: Large ribosomal subunit protein uL5 (178 aa).

This sequence belongs to the universal ribosomal protein uL5 family. In terms of assembly, part of the 50S ribosomal subunit; part of the 5S rRNA/L5/L18/L25 subcomplex. Contacts the 5S rRNA and the P site tRNA. Forms a bridge to the 30S subunit in the 70S ribosome.

Functionally, this is one of the proteins that bind and probably mediate the attachment of the 5S RNA into the large ribosomal subunit, where it forms part of the central protuberance. In the 70S ribosome it contacts protein S13 of the 30S subunit (bridge B1b), connecting the 2 subunits; this bridge is implicated in subunit movement. Contacts the P site tRNA; the 5S rRNA and some of its associated proteins might help stabilize positioning of ribosome-bound tRNAs. The chain is Large ribosomal subunit protein uL5 from Psychrobacter cryohalolentis (strain ATCC BAA-1226 / DSM 17306 / VKM B-2378 / K5).